Reading from the N-terminus, the 129-residue chain is 8-oxo-dGTP diphosphatase (129 aa).

In terms of domain architecture, Nudix hydrolase spans methionine 1 to leucine 129. 8-oxo-dGTP-binding positions include arginine 23, histidine 28, and glutamate 34 to glycine 37. Glycine 37 and glutamate 57 together coordinate Mg(2+). The short motif at glycine 38–glycine 59 is the Nudix box element. Residue asparagine 119 participates in 8-oxo-dGTP binding.

Belongs to the Nudix hydrolase family. Monomer. Requires Mg(2+) as cofactor.

It catalyses the reaction 8-oxo-dGTP + H2O = 8-oxo-dGMP + diphosphate + H(+). The catalysed reaction is 8-oxo-GTP + H2O = 8-oxo-GMP + diphosphate + H(+). The enzyme catalyses 8-oxo-dGDP + H2O = 8-oxo-dGMP + phosphate + H(+). It carries out the reaction 8-oxo-GDP + H2O = 8-oxo-GMP + phosphate + H(+). Functionally, specifically hydrolyzes both 8-oxo-deoxyguanosine triphosphate (8-oxo-dGTP) and 8-oxo-guanosine triphosphate (8-oxo-GTP) to the related monophosphates, thereby cleaning up the nucleotide pools and preventing misincorporation of 8-oxoGua into DNA and RNA. It prevents replicational errors by removing an oxidatively damaged form of guanine (8-oxo-dGTP) from DNA and the nucleotide pool. 8-oxo-dGTP can be inserted opposite dA and dC residues of template DNA with almost equal efficiency thus leading to A.T to G.C transversions. MutT may also ensure transcriptional fidelity, removing 8-oxo-GTP from the ribonucleotide triphosphate pool. However, due to the lower efficiency of RNA polymerase 8-oxo-GTP incorporation, MutT is probably not a major contributor to transcriptional fidelity. It also hydrolyzes 8-oxo-dGDP and 8-oxo-GDP to their monophosphate form. In vitro, can also use dGTP, dGDP and other various nucleoside di- and triphosphates, with much lower efficiency. Works cooperatively with MutM and MutY to prevent accumulation in the DNA of oxidized guanine residues. The protein is 8-oxo-dGTP diphosphatase of Escherichia coli (strain K12).